The primary structure comprises 289 residues: Early E1A protein (289 aa).

The segment at 41 to 49 (PTLHELYDL) is interaction with RB1 in competition with E2F1. The interaction with UBE2I stretch occupies residues 76 to 140 (EGIDLLTFPP…PSDDEDEEGE (65 aa)). The segment at 82-107 (TFPPAPGSPEPPHLSRQPEQPEQRAL) is disordered. Residues 84–93 (PPAPGSPEPP) show a composition bias toward pro residues. The residue at position 89 (Ser-89) is a Phosphoserine; by host. The short motif at 113 to 117 (PNLVP) is the PXLXP motif, interaction with host ZMYND11 element. The LXCXE motif, interaction with host RB1 and TMEM173/STING signature appears at 122-126 (LTCHE). A zinc finger spans residues 154 to 174 (CRSCHYHRRNTGDPDIMCSLC). The disordered stretch occupies residues 187-245 (VSEPEPEPEPEPEPARPTRRPKLVPAILRRPTSPVSRECNSSTDSCDSGPSNTPPEIHP). Phosphoserine; by host occurs at positions 219 and 231. The segment covering 219–237 (SPVSRECNSSTDSCDSGPS) has biased composition (polar residues). Residues 258-289 (RVGGRRQAVECIEDLLNESGQPLDLSCKRPRP) carry the Bipartite nuclear localization signal motif. The PXDLS motif, CTBP-binding signature appears at 279–283 (PLDLS).

The protein belongs to the adenoviridae E1A protein family. As to quaternary structure, interacts with host UBE2I; this interaction interferes with polySUMOylation. Interacts with host RB1; this interaction induces the aberrant dissociation of RB1-E2F1 complex thereby disrupting the activity of RB1 and activating E2F1-regulated genes. Interacts with host ATF7; the interaction enhances ATF7-mediated viral transactivation activity which requires the zinc binding domains of both proteins. Isoform early E1A 32 kDa protein and isoform early E1A 26 kDa protein interact (via N-terminus) with CUL1 and E3 ubiquitin ligase RBX1; these interactions inhibit RBX1-CUL1-dependent elongation reaction of ubiquitin chains and attenuate ubiquitination of SCF(FBXW7) target proteins. Interacts (via PXLXP motif) with host ZMYND11/BS69 (via MYND-type zinc finger); this interaction inhibits E1A mediated transactivation. Interacts with host EP300; this interaction stimulates the acetylation of RB1 by recruiting EP300 and RB1 into a multimeric-protein complex. Interacts with host CTBP1 and CTBP2; this interaction seems to potentiate viral replication. Interacts with host DCAF7. Interacts with host DYRK1A. Interacts with host KPNA4; this interaction allows E1A import into the host nucleus. Interacts with host EP400; this interaction stabilizes MYC. Interacts (via LXCXE motif) with host TMEM173/STING; this interaction impairs the ability of TMEM173/STING to sense cytosolic DNA and promote the production of type I interferon (IFN-alpha and IFN-beta). Interacts (via C-terminus) with host ZBED1/hDREF (via C-terminus); the interaction is direct.

The protein localises to the host nucleus. In terms of biological role, plays a role in viral genome replication by driving entry of quiescent cells into the cell cycle. Stimulation of progression from G1 to S phase allows the virus to efficiently use the cellular DNA replicating machinery to achieve viral genome replication. E1A protein has both transforming and trans-activating activities. Induces the disassembly of the E2F1 transcription factor from RB1 by direct competition for the same binding site on RB1, with subsequent transcriptional activation of E2F1-regulated S-phase genes and of the E2 region of the adenoviral genome. Release of E2F1 leads to the ARF-mediated inhibition of MDM2 and causes TP53/p53 to accumulate because it is not targeted for degradation by MDM2-mediated ubiquitination anymore. This increase in TP53, in turn, would arrest the cell proliferation and direct its death but this effect is counteracted by the viral protein E1B-55K. Inactivation of the ability of RB1 to arrest the cell cycle is critical for cellular transformation, uncontrolled cellular growth and proliferation induced by viral infection. Interaction with RBX1 and CUL1 inhibits ubiquitination of the proteins targeted by SCF(FBXW7) ubiquitin ligase complex, and may be linked to unregulated host cell proliferation. The tumorigenesis-restraining activity of E1A may be related to the disruption of the host CtBP-CtIP complex through the CtBP binding motif. Interacts with host TBP protein; this interaction probably disrupts the TBP-TATA complex. Interaction with host TMEM173/STING impairs the ability of TMEM173/STING to sense cytosolic DNA and promote the production of type I interferon (IFN-alpha and IFN-beta). Promotes the sumoylation of host ZBED1/hDREF with SUMO1. The chain is Early E1A protein from Homo sapiens (Human).